The sequence spans 366 residues: Molybdenum import ATP-binding protein ModC (366 aa).

In terms of domain architecture, ABC transporter spans 1–231; it reads MSEVILQLQK…KAMRPWQSFS (231 aa). 33–40 contacts ATP; it reads GRSGAGKT. Residues 292-361 form the Mop domain; sequence ASSIRNILPA…IKGVSVAQRD (70 aa).

This sequence belongs to the ABC transporter superfamily. Molybdate importer (TC 3.A.1.8) family. The complex is composed of two ATP-binding proteins (ModC), two transmembrane proteins (ModB) and a solute-binding protein (ModA).

The protein resides in the cell inner membrane. It catalyses the reaction molybdate(out) + ATP + H2O = molybdate(in) + ADP + phosphate + H(+). Its function is as follows. Part of the ABC transporter complex ModABC involved in molybdenum import. Responsible for energy coupling to the transport system. This Vibrio cholerae serotype O1 (strain ATCC 39315 / El Tor Inaba N16961) protein is Molybdenum import ATP-binding protein ModC.